A 71-amino-acid polypeptide reads, in one-letter code: MSKGKIEIIETCCRRCGKSIRTLSHTIIGADDAREKFGSICGGCITPEEDNELTEMLLAAAVRRMSGATLQ.

Positions 9 to 28 (IETCCRRCGKSIRTLSHTII) form a DNA-binding region, H-T-H motif.

The protein is Protein KleB (kleB) of Escherichia coli.